Reading from the N-terminus, the 795-residue chain is Protein translocase subunit SecA 2 (795 aa).

ATP-binding positions include glutamine 84, 102–106, and aspartate 496; that span reads GEGKT.

It belongs to the SecA family. As to quaternary structure, monomer and homodimer. Part of the essential Sec protein translocation apparatus which comprises SecA, SecYEG and auxiliary proteins SecDF. Other proteins may also be involved.

It is found in the cell membrane. The protein resides in the cytoplasm. It carries out the reaction ATP + H2O + cellular proteinSide 1 = ADP + phosphate + cellular proteinSide 2.. In terms of biological role, part of the Sec protein translocase complex. Interacts with the SecYEG preprotein conducting channel. Has a central role in coupling the hydrolysis of ATP to the transfer of proteins into and across the cell membrane, serving as an ATP-driven molecular motor driving the stepwise translocation of polypeptide chains across the membrane. The sequence is that of Protein translocase subunit SecA 2 from Streptococcus agalactiae serotype III (strain NEM316).